We begin with the raw amino-acid sequence, 614 residues long: Phosphomethylpyrimidine synthase (614 aa).

Residues 1–16 (MNAQLSALQQQAQQLS) show a composition bias toward low complexity. Positions 1 to 36 (MNAQLSALQQQAQQLSESVTRPIPGSRKIHVPGSRP) are disordered. Residues N230, M259, Y288, H324, 344–346 (SRG), 385–388 (DGLR), and E424 each bind substrate. H428 contacts Zn(2+). Y451 serves as a coordination point for substrate. H492 serves as a coordination point for Zn(2+). [4Fe-4S] cluster is bound by residues C572, C575, and C580.

Belongs to the ThiC family. Homodimer. [4Fe-4S] cluster serves as cofactor.

It catalyses the reaction 5-amino-1-(5-phospho-beta-D-ribosyl)imidazole + S-adenosyl-L-methionine = 4-amino-2-methyl-5-(phosphooxymethyl)pyrimidine + CO + 5'-deoxyadenosine + formate + L-methionine + 3 H(+). It functions in the pathway cofactor biosynthesis; thiamine diphosphate biosynthesis. In terms of biological role, catalyzes the synthesis of the hydroxymethylpyrimidine phosphate (HMP-P) moiety of thiamine from aminoimidazole ribotide (AIR) in a radical S-adenosyl-L-methionine (SAM)-dependent reaction. The chain is Phosphomethylpyrimidine synthase from Stenotrophomonas maltophilia (strain R551-3).